The chain runs to 1216 residues: Probable cation-transporting ATPase 13A5 (1216 aa).

Transmembrane regions (helical) follow at residues arginine 33–tryptophan 53, leucine 198–tryptophan 218, glycine 222–valine 242, phenylalanine 401–methionine 421, and methionine 433–glycine 453. Catalysis depends on aspartate 486, which acts as the 4-aspartylphosphate intermediate. N-linked (GlcNAc...) asparagine glycans are attached at residues asparagine 650 and asparagine 817. Mg(2+) is bound by residues aspartate 848 and aspartate 852. 6 consecutive transmembrane segments (helical) span residues alanine 896 to isoleucine 916, tyrosine 933 to isoleucine 950, leucine 971 to leucine 991, phenylalanine 1040 to phenylalanine 1060, leucine 1075 to phenylalanine 1095, and valine 1113 to valine 1133.

The protein belongs to the cation transport ATPase (P-type) (TC 3.A.3) family. Type V subfamily. As to expression, specifically expressed in brain and stomach.

It is found in the membrane. It catalyses the reaction ATP + H2O = ADP + phosphate + H(+). This is Probable cation-transporting ATPase 13A5 (Atp13a5) from Mus musculus (Mouse).